Here is a 419-residue protein sequence, read N- to C-terminus: uncharacterized protein (419 aa).

This is an uncharacterized protein from Acinetobacter baylyi (strain ATCC 33305 / BD413 / ADP1).